The following is a 251-amino-acid chain: Adapter protein MecA (251 aa).

The protein belongs to the MecA family. In terms of assembly, homodimer.

Enables the recognition and targeting of unfolded and aggregated proteins to the ClpC protease or to other proteins involved in proteolysis. The chain is Adapter protein MecA from Streptococcus agalactiae serotype III (strain NEM316).